We begin with the raw amino-acid sequence, 2080 residues long: Dedicator of cytokinesis protein 6 (2080 aa).

The span at 20–31 (EVRKQVSRERSG) shows a compositional bias: basic and acidic residues. 3 disordered regions span residues 20-44 (EVRK…SSLG), 156-189 (QDTP…SGAS), and 408-441 (PQDR…GDDA). The span at 32-42 (SPHSSRRSSSS) shows a compositional bias: low complexity. At S178 the chain carries Phosphoserine. Positions 408–425 (PQDRDSDSEGERRPTWAE) are enriched in basic and acidic residues. One can recognise a C2 DOCK-type domain in the interval 546–712 (RNLLFVYPHS…GVFSVELTAV (167 aa)). Residue R863 is modified to Omega-N-methylarginine. Phosphoserine occurs at positions 870, 878, and 882. A disordered region spans residues 1101-1123 (ASPSPSVSSTTSQSSTFSSQAPD). Low complexity predominate over residues 1104–1122 (SPSVSSTTSQSSTFSSQAP). S1341 carries the phosphoserine modification. The DOCKER domain occupies 1620 to 2056 (RGYQGSPDLR…LQPLLTQRLP (437 aa)). A Phosphothreonine modification is found at T2064. 2 positions are modified to phosphoserine: S2065 and S2069.

Belongs to the DOCK family. As to expression, widely expressed with highest levels in lung and heart.

It is found in the cytoplasm. The protein localises to the perinuclear region. Functionally, acts as a guanine nucleotide exchange factor (GEF) for CDC42 and RAC1 small GTPases. Through its activation of CDC42 and RAC1, regulates neurite outgrowth in an vitro differentiation system. In Mus musculus (Mouse), this protein is Dedicator of cytokinesis protein 6 (Dock6).